The sequence spans 677 residues: Vertnin (677 aa).

2 disordered regions span residues 356-376 and 458-490; these read GSTG…SSPE and HSGS…KLSP. Positions 458-472 are enriched in basic and acidic residues; it reads HSGSSEEGSDADKSQ.

It belongs to the vertnin family.

The protein resides in the nucleus. In terms of biological role, functions as a transcriptional repressor that modulates bmp2b expression during dorsoventral patterning. This Danio rerio (Zebrafish) protein is Vertnin (vrtn).